A 668-amino-acid polypeptide reads, in one-letter code: Probable 6-phosphofructo-2-kinase PB17E12.14c (668 aa).

A compositionally biased stretch (basic and acidic residues) spans 1 to 14 (MSNNNNKDDSELQS). Disordered regions lie at residues 1–105 (MSNN…GSRP) and 136–185 (HRVP…EATN). 3 stretches are compositionally biased toward polar residues: residues 46–56 (NDHSFTNTDSV), 65–86 (SPVS…QNSP), and 164–184 (SSMS…SEAT). 197–204 (GLPARGKS) lines the ATP pocket. Catalysis depends on residues Asp-281 and Cys-312. Residue Arg-346 coordinates beta-D-fructose 6-phosphate. Glu-540 is a catalytic residue. His-608 serves as the catalytic Proton donor.

The enzyme catalyses beta-D-fructose 6-phosphate + ATP = beta-D-fructose 2,6-bisphosphate + ADP + H(+). Synthesis of fructose 2,6-bisphosphate. In Schizosaccharomyces pombe (strain 972 / ATCC 24843) (Fission yeast), this protein is Probable 6-phosphofructo-2-kinase PB17E12.14c.